The primary structure comprises 454 residues: F-box/WD-40 repeat-containing protein At3g52030 (454 aa).

The region spanning 20-66 is the F-box domain; sequence PTSIESLDADILCIIFSFLDLFDLVHCTVVCNSWNAVIKRLKLLQAS. 8 WD repeats span residues 85–116, 117–153, 170–214, 215–255, 258–296, 301–340, 343–383, and 422–454; these read DRPAEIDVEDFAMKHHKMALLRGRIEIERWEA, HSHRVSQCRMKKGLLLTGVGDKVMRLWSLKSYKCMEE, SKKL…SIFP, SRAG…CSQI, TQGGPITCLSLSDNQLFLSGSSLGRVTVSDPLMDQPVAT, ITAGGIQTICFNQGTNLAFIGTTGGYVSCWDLRKMDRLWE, VSPN…VLSR, and KVRPQISCIAMGMKKMVTAHNGKCISVWKFNLS.

The polypeptide is F-box/WD-40 repeat-containing protein At3g52030 (Arabidopsis thaliana (Mouse-ear cress)).